The following is a 185-amino-acid chain: ATP-dependent protease subunit HslV (185 aa).

The active site involves T13. Positions 167, 170, and 173 each coordinate Na(+).

Belongs to the peptidase T1B family. HslV subfamily. As to quaternary structure, a double ring-shaped homohexamer of HslV is capped on each side by a ring-shaped HslU homohexamer. The assembly of the HslU/HslV complex is dependent on binding of ATP.

It localises to the cytoplasm. It catalyses the reaction ATP-dependent cleavage of peptide bonds with broad specificity.. Allosterically activated by HslU binding. Protease subunit of a proteasome-like degradation complex believed to be a general protein degrading machinery. This is ATP-dependent protease subunit HslV from Sinorhizobium fredii (strain NBRC 101917 / NGR234).